Here is a 365-residue protein sequence, read N- to C-terminus: tRNA 2-selenouridine synthase (365 aa).

One can recognise a Rhodanese domain in the interval 12–136 (FLDDVPMMDM…LRTFLLDTTQ (125 aa)). C95 functions as the S-selanylcysteine intermediate in the catalytic mechanism.

This sequence belongs to the SelU family. As to quaternary structure, monomer.

The catalysed reaction is 5-methylaminomethyl-2-thiouridine(34) in tRNA + selenophosphate + (2E)-geranyl diphosphate + H2O + H(+) = 5-methylaminomethyl-2-selenouridine(34) in tRNA + (2E)-thiogeraniol + phosphate + diphosphate. It carries out the reaction 5-methylaminomethyl-2-thiouridine(34) in tRNA + (2E)-geranyl diphosphate = 5-methylaminomethyl-S-(2E)-geranyl-thiouridine(34) in tRNA + diphosphate. It catalyses the reaction 5-methylaminomethyl-S-(2E)-geranyl-thiouridine(34) in tRNA + selenophosphate + H(+) = 5-methylaminomethyl-2-(Se-phospho)selenouridine(34) in tRNA + (2E)-thiogeraniol. The enzyme catalyses 5-methylaminomethyl-2-(Se-phospho)selenouridine(34) in tRNA + H2O = 5-methylaminomethyl-2-selenouridine(34) in tRNA + phosphate. In terms of biological role, involved in the post-transcriptional modification of the uridine at the wobble position (U34) of tRNA(Lys), tRNA(Glu) and tRNA(Gln). Catalyzes the conversion of 2-thiouridine (S2U-RNA) to 2-selenouridine (Se2U-RNA). Acts in a two-step process involving geranylation of 2-thiouridine (S2U) to S-geranyl-2-thiouridine (geS2U) and subsequent selenation of the latter derivative to 2-selenouridine (Se2U) in the tRNA chain. The chain is tRNA 2-selenouridine synthase from Pseudomonas putida (strain W619).